Reading from the N-terminus, the 297-residue chain is Averufin oxidase stcO (297 aa).

A helical membrane pass occupies residues 277–297 (VVVLGVCILLLLGGLLYSIKA).

It belongs to the avfA family.

It is found in the membrane. It participates in mycotoxin biosynthesis; sterigmatocystin biosynthesis. Averufin oxidase; part of the gene cluster that mediates the biosynthesis of sterigmatocystin (ST), a polyketide-derived furanocoumarin which is part of the most toxic and carcinogenic compounds among the known mycotoxins. The first step in the biosynthesis of sterigmatocystin is the production of hexanoate by the fatty acid synthase (FAS) units stcJ and stcK. The polyketide backbone is assembled by the non-reducing polyketide synthase stcA by condensation of the starter hexanoyl-CoA and 7 malonyl-CoA extender units followed by cyclization and release of norsolorinic acid. Norsolorinic acid is the first stable intermediate in the biosynthesis of sterigmatocystin and is converted into averantin (AVN) by the ketoreductase stcE which reduces the hexanoate ketone to an alcohol. Averantin is then oxidized into 5'-hydroxyaverantin (HAVN) by the cytochrome P450 monooxygenase stcF. 5'-hydroxyaverantin is further converted to 5'-oxyaverantin (OAVN) by the 5'-hydroxyaverantin dehydrogenase stcG. The next step is the conversion of OAVN into averufin (AVF) which is catalyzed by a yet to be identified enzyme. The cytochrome P450 monooxygenase stcB and the flavin-binding monooxygenase stcW are both required for the conversion of averufin to 1-hydroxyversicolorone. The esterase stcI probably catalyzes the formation of versiconal hemiacetal acetate from 1-hydroxyversicolorone. The oxydoreductase stcN then probably catalyzes the biosynthetic step from versiconal to versicolorin B (VERB). The next step is performed by the versicolorin B desaturase stcL to produce versicolorin A (VERA). The ketoreductase stcU and the cytochrome P450 monooxygenase stcS are involved in the conversion of versicolorin A to demethylsterigmatocystin. The Baeyer-Villiger oxidas stcQ and the reductase stcR might be involved in the biosynthetic step from versicolorin A to demethylsterigmatocystin. The final step in the biosynthesis of sterigmatocystin is the methylation of demethylsterigmatocystin catalyzed by the methyltransferase stcP. The sequence is that of Averufin oxidase stcO from Emericella nidulans (strain FGSC A4 / ATCC 38163 / CBS 112.46 / NRRL 194 / M139) (Aspergillus nidulans).